The chain runs to 209 residues: Ribosomal RNA large subunit methyltransferase E (209 aa).

Residues Gly63, Trp65, Asp83, Asp99, and Asp124 each coordinate S-adenosyl-L-methionine. The Proton acceptor role is filled by Lys164.

This sequence belongs to the class I-like SAM-binding methyltransferase superfamily. RNA methyltransferase RlmE family.

The protein localises to the cytoplasm. It carries out the reaction uridine(2552) in 23S rRNA + S-adenosyl-L-methionine = 2'-O-methyluridine(2552) in 23S rRNA + S-adenosyl-L-homocysteine + H(+). Functionally, specifically methylates the uridine in position 2552 of 23S rRNA at the 2'-O position of the ribose in the fully assembled 50S ribosomal subunit. This chain is Ribosomal RNA large subunit methyltransferase E, found in Shewanella sp. (strain ANA-3).